Here is a 688-residue protein sequence, read N- to C-terminus: Methionine--tRNA ligase (688 aa).

The 'HIGH' region signature appears at 20–30 (PYANGSIHLGH). Zn(2+) contacts are provided by Cys151, Cys154, Cys164, and Cys167. Positions 337–341 (KMSKS) match the 'KMSKS' region motif. Lys340 serves as a coordination point for ATP. In terms of domain architecture, tRNA-binding spans 587–688 (TFAQVDLRIA…EGAQPGMRVM (102 aa)).

It belongs to the class-I aminoacyl-tRNA synthetase family. MetG type 1 subfamily. As to quaternary structure, homodimer. Requires Zn(2+) as cofactor.

It is found in the cytoplasm. The catalysed reaction is tRNA(Met) + L-methionine + ATP = L-methionyl-tRNA(Met) + AMP + diphosphate. Is required not only for elongation of protein synthesis but also for the initiation of all mRNA translation through initiator tRNA(fMet) aminoacylation. The sequence is that of Methionine--tRNA ligase from Vibrio parahaemolyticus serotype O3:K6 (strain RIMD 2210633).